The following is a 323-amino-acid chain: Cysteine synthase A (323 aa).

Hydrogen sulfide-binding residues include Asn-8 and Arg-35. N6-(pyridoxal phosphate)lysine is present on Lys-42. Pyridoxal 5'-phosphate-binding positions include Asn-72 and 177 to 181 (GTGGT). Leu-269 lines the hydrogen sulfide pocket. Residue Ser-273 participates in pyridoxal 5'-phosphate binding.

Belongs to the cysteine synthase/cystathionine beta-synthase family. In terms of assembly, homodimer. Pyridoxal 5'-phosphate is required as a cofactor.

It carries out the reaction O-acetyl-L-serine + hydrogen sulfide = L-cysteine + acetate. Its pathway is amino-acid biosynthesis; L-cysteine biosynthesis; L-cysteine from L-serine: step 2/2. This Escherichia coli O157:H7 protein is Cysteine synthase A (cysK).